The primary structure comprises 319 residues: Aliphatic sulfonates import ATP-binding protein SsuB (319 aa).

Positions 63–282 (VTLSGVSKRF…ARASAAFAAL (220 aa)) constitute an ABC transporter domain. Residue 95–102 (GRSGCGKS) participates in ATP binding.

This sequence belongs to the ABC transporter superfamily. Aliphatic sulfonates importer (TC 3.A.1.17.2) family. The complex is composed of two ATP-binding proteins (SsuB), two transmembrane proteins (SsuC) and a solute-binding protein (SsuA).

The protein resides in the cell inner membrane. The catalysed reaction is ATP + H2O + aliphatic sulfonate-[sulfonate-binding protein]Side 1 = ADP + phosphate + aliphatic sulfonateSide 2 + [sulfonate-binding protein]Side 1.. Part of the ABC transporter complex SsuABC involved in aliphatic sulfonates import. Responsible for energy coupling to the transport system. The chain is Aliphatic sulfonates import ATP-binding protein SsuB from Burkholderia ambifaria (strain ATCC BAA-244 / DSM 16087 / CCUG 44356 / LMG 19182 / AMMD) (Burkholderia cepacia (strain AMMD)).